The primary structure comprises 81 residues: Acyl carrier protein (81 aa).

Positions 2 to 80 (ASNEEILAGL…DAVSFIANAQ (79 aa)) constitute a Carrier domain. Ser40 carries the post-translational modification O-(pantetheine 4'-phosphoryl)serine.

The protein belongs to the acyl carrier protein (ACP) family. Post-translationally, 4'-phosphopantetheine is transferred from CoA to a specific serine of apo-ACP by AcpS. This modification is essential for activity because fatty acids are bound in thioester linkage to the sulfhydryl of the prosthetic group.

The protein resides in the cytoplasm. It functions in the pathway lipid metabolism; fatty acid biosynthesis. Its function is as follows. Carrier of the growing fatty acid chain in fatty acid biosynthesis. The protein is Acyl carrier protein of Paenarthrobacter aurescens (strain TC1).